A 132-amino-acid chain; its full sequence is Two-component response regulator ORR42 (132 aa).

Residues 11 to 125 (RALLVEDIKV…LEHILQETRS (115 aa)) enclose the Response regulatory domain. At D61 the chain carries 4-aspartylphosphate.

The protein belongs to the ARR family. Type-C subfamily. In terms of processing, two-component system major event consists of a His-to-Asp phosphorelay between a sensor histidine kinase (HK) and a response regulator (RR). In plants, the His-to-Asp phosphorelay involves an additional intermediate named Histidine-containing phosphotransfer protein (HPt). This multistep phosphorelay consists of a His-Asp-His-Asp sequential transfer of a phosphate group between first a His and an Asp of the HK protein, followed by the transfer to a conserved His of the HPt protein and finally the transfer to an Asp in the receiver domain of the RR protein.

Its function is as follows. Functions as a response regulator involved in His-to-Asp phosphorelay signal transduction system. Phosphorylation of the Asp residue in the receiver domain activates the ability of the protein to promote the transcription of target genes. May directly activate some type-A response regulators in response to cytokinins. The polypeptide is Two-component response regulator ORR42 (Oryza sativa subsp. japonica (Rice)).